Here is a 303-residue protein sequence, read N- to C-terminus: Probable cell division protein WhiA (303 aa).

The segment at residues 272–303 (SIQQVADALEFPITKSGVNHRLRKINKIADDL) is a DNA-binding region (H-T-H motif).

The protein belongs to the WhiA family.

Its function is as follows. Involved in cell division and chromosome segregation. This is Probable cell division protein WhiA from Streptococcus pyogenes serotype M12 (strain MGAS2096).